We begin with the raw amino-acid sequence, 460 residues long: CCA-adding enzyme (460 aa).

Residues S50 and R53 each coordinate ATP. 2 residues coordinate CTP: S50 and R53. The Mg(2+) site is built by D62, D64, and D117. Positions 140, 159, and 168 each coordinate ATP. CTP-binding residues include H140, K159, and Y168.

The protein belongs to the tRNA nucleotidyltransferase/poly(A) polymerase family. Archaeal CCA-adding enzyme subfamily. As to quaternary structure, homodimer. Mg(2+) is required as a cofactor.

It carries out the reaction a tRNA precursor + 2 CTP + ATP = a tRNA with a 3' CCA end + 3 diphosphate. The enzyme catalyses a tRNA with a 3' CCA end + 2 CTP + ATP = a tRNA with a 3' CCACCA end + 3 diphosphate. In terms of biological role, catalyzes the addition and repair of the essential 3'-terminal CCA sequence in tRNAs without using a nucleic acid template. Adds these three nucleotides in the order of C, C, and A to the tRNA nucleotide-73, using CTP and ATP as substrates and producing inorganic pyrophosphate. tRNA 3'-terminal CCA addition is required both for tRNA processing and repair. Also involved in tRNA surveillance by mediating tandem CCA addition to generate a CCACCA at the 3' terminus of unstable tRNAs. While stable tRNAs receive only 3'-terminal CCA, unstable tRNAs are marked with CCACCA and rapidly degraded. The chain is CCA-adding enzyme from Methanoregula boonei (strain DSM 21154 / JCM 14090 / 6A8).